The following is a 959-amino-acid chain: Mitogen-activated protein kinase kinase kinase 13 (959 aa).

The tract at residues 1–47 (MANPQEHLSCSSLPHLPLTENKTSGGRNELAAMGNHPSPKLPEDPQE) is disordered. Residues 7-18 (HLSCSSLPHLPL) are compositionally biased toward low complexity. The Protein kinase domain occupies 167–408 (ISELQWLGSG…FRQTLMHLDI (242 aa)). Residues 173 to 181 (LGSGAQGAV) and K194 each bind ATP. The active-site Proton acceptor is the D278. Leucine-zipper regions lie at residues 432 to 453 (VKKH…DEEL) and 485 to 506 (LSAI…EQAV). Disordered regions lie at residues 533 to 599 (KRKG…GSHS), 739 to 828 (GSLD…RQRP), 842 to 902 (SSEN…LSDK), and 927 to 959 (NPVQ…SATW). A compositionally biased stretch (polar residues) spans 566 to 577 (SPLSGSPKMSTA). Residues 581 to 593 (SRYRSKPRHRRGN) are compositionally biased toward basic residues. Polar residues-rich tracts occupy residues 754 to 774 (DLSS…SERT) and 780 to 790 (SGCQSGISHQF). Residues 808–820 (DSSEEEGEVDSEV) are compositionally biased toward acidic residues. A compositionally biased stretch (basic and acidic residues) spans 866–876 (SANRRQDRLAE). Acidic residues predominate over residues 934–943 (SDCDSSEGEC). Residues 947–959 (TVRTSKNYSSATW) are compositionally biased toward polar residues.

This sequence belongs to the protein kinase superfamily. STE Ser/Thr protein kinase family. MAP kinase kinase kinase subfamily. Homodimer; forms dimers through the leucine-zipper motif. Interacts with the C-terminus of MAPK8IP1 through the kinase catalytic domain. Binds PRDX3. Associates with the IKK complex through the kinase domain. It depends on Mg(2+) as a cofactor. Post-translationally, autophosphorylated on serine and threonine residues.

The protein resides in the cytoplasm. The protein localises to the membrane. It catalyses the reaction L-seryl-[protein] + ATP = O-phospho-L-seryl-[protein] + ADP + H(+). The catalysed reaction is L-threonyl-[protein] + ATP = O-phospho-L-threonyl-[protein] + ADP + H(+). With respect to regulation, activated by autophosphorylation and homodimerization. Activates the JUN N-terminal pathway through activation of the MAP kinase kinase MAP2K7. Acts synergistically with PRDX3 to regulate the activation of NF-kappa-B in the cytosol. This activation is kinase-dependent and involves activating the IKK complex, the IKBKB-containing complex that phosphorylates inhibitors of NF-kappa-B. This chain is Mitogen-activated protein kinase kinase kinase 13 (Map3k13), found in Mus musculus (Mouse).